Reading from the N-terminus, the 218-residue chain is MSETLIKICGLTDEDGVDAAVEAGVDMIGFVFFEPSPRDLDPARAAELLDGVPHAEEGGPLRVGLFVDADDATLEAVFAGVRLDVLQFHGEESPERVEWARLEYGLPVIKALPIASAADLERAALYAEVADYLLFDARPPAGADRPGGHAQTFDWSLLAGFSAPVPWLLAGGLTPENVAEAIKVSGATAVDVSSGVETVRGIKDPERVSAFVKAVREG.

Belongs to the TrpF family.

It catalyses the reaction N-(5-phospho-beta-D-ribosyl)anthranilate = 1-(2-carboxyphenylamino)-1-deoxy-D-ribulose 5-phosphate. The protein operates within amino-acid biosynthesis; L-tryptophan biosynthesis; L-tryptophan from chorismate: step 3/5. The protein is N-(5'-phosphoribosyl)anthranilate isomerase of Rhodospirillum rubrum (strain ATCC 11170 / ATH 1.1.1 / DSM 467 / LMG 4362 / NCIMB 8255 / S1).